Here is a 517-residue protein sequence, read N- to C-terminus: Tyrosine-protein kinase Fgr (517 aa).

The N-myristoyl glycine moiety is linked to residue G2. S-palmitoyl cysteine attachment occurs at residues C3 and C6. The segment covering 17–33 (VGLEGDFRSQGAEERYY) has biased composition (basic and acidic residues). The segment at 17-46 (VGLEGDFRSQGAEERYYPDPTQGRSSSISP) is disordered. Residue Y32 is modified to Phosphotyrosine. S50 carries the post-translational modification Phosphoserine. One can recognise an SH3 domain in the interval 65 to 126 (TGVTIFVALY…PSNYVAPVDS (62 aa)). An SH2 domain is found at 132–229 (WYFGKISRKD…GLCYLLTAPC (98 aa)). Y196 is subject to Phosphotyrosine. Residue S206 is modified to Phosphoserine. The Protein kinase domain occupies 251–504 (IALDRRLGTG…YLQSFLEDYF (254 aa)). Residues 257–265 (LGTGCFGDV) and K279 contribute to the ATP site. D370 serves as the catalytic Proton acceptor. Position 400 is a phosphotyrosine; by autocatalysis (Y400). Y511 carries the phosphotyrosine; by SRC modification.

It belongs to the protein kinase superfamily. Tyr protein kinase family. SRC subfamily. Interacts with ITGB1, ITGB2, MS4A2/FCER1B and FCGR2. Interacts (via SH2 domain) with SYK (tyrosine phosphorylated). Interacts (via SH2 domain) with FLT3 (tyrosine phosphorylated). Interacts with PTK2/FAK1. Interacts (via SH2 domain) with HCLS1 (tyrosine phosphorylated by SYK). Interacts with SIRPA and PTPNS1. Interacts (not phosphorylated on tyrosine residues) with CBL; FGR tyrosine phosphorylation promotes dissociation. Interacts with CLNK. Post-translationally, ubiquitinated. Becomes ubiquitinated in response to ITGB2 signaling; this does not lead to degradation. In terms of processing, phosphorylated. Autophosphorylated on tyrosine residues. Becomes phosphorylated in response to FCGR2 engagement, cell adhesion and signaling by ITGB2. Prior phosphorylation at Tyr-511 by SRC inhibits ulterior autophosphorylation at Tyr-400. As to expression, detected in brain cortex (at protein level).

The protein resides in the cell membrane. The protein localises to the cell projection. Its subcellular location is the ruffle membrane. It is found in the cytoplasm. It localises to the cytosol. The protein resides in the cytoskeleton. The protein localises to the mitochondrion inner membrane. Its subcellular location is the mitochondrion intermembrane space. It carries out the reaction L-tyrosyl-[protein] + ATP = O-phospho-L-tyrosyl-[protein] + ADP + H(+). Its activity is regulated as follows. Activated by autophosphorylation. Prior phosphorylation at Tyr-511 by SRC inhibits ulterior autophosphorylation at Tyr-400. Activated by phorbol myristate acetate, phosphatidic acid and poly-Lys. Binding (via SH2 domain) of HCLS1 that is already phosphorylated by SYK strongly increases kinase activity. In terms of biological role, non-receptor tyrosine-protein kinase that transmits signals from cell surface receptors devoid of kinase activity and contributes to the regulation of immune responses, including neutrophil, monocyte, macrophage and mast cell functions, cytoskeleton remodeling in response to extracellular stimuli, phagocytosis, cell adhesion and migration. Promotes mast cell degranulation, release of inflammatory cytokines and IgE-mediated anaphylaxis. Acts downstream of receptors that bind the Fc region of immunoglobulins, such as MS4A2/FCER1B, FCER1G and FCGR2. Acts downstream of ITGB1 and ITGB2, and regulates actin cytoskeleton reorganization, cell spreading and adhesion. Depending on the context, activates or inhibits cellular responses. Functions as a negative regulator of ITGB2 signaling, phagocytosis and SYK activity in monocytes. Required for normal ITGB1 and ITGB2 signaling, normal cell spreading and adhesion in neutrophils and macrophages. Functions as a positive regulator of cell migration and regulates cytoskeleton reorganization via RAC1 activation. Phosphorylates SYK (in vitro) and promotes SYK-dependent activation of AKT1 and MAP kinase signaling. Phosphorylates PLD2 in antigen-stimulated mast cells, leading to PLD2 activation and the production of the signaling molecules lysophosphatidic acid and diacylglycerol. Promotes activation of PIK3R1. Phosphorylates FASLG, and thereby regulates its ubiquitination and subsequent internalization. Phosphorylates ABL1. Promotes phosphorylation of CBL, CTTN, PIK3R1, PTK2/FAK1, PTK2B/PYK2 and VAV2. Phosphorylates HCLS1 that has already been phosphorylated by SYK, but not unphosphorylated HCLS1. Together with CLNK, it acts as a negative regulator of natural killer cell-activating receptors and inhibits interferon-gamma production. The polypeptide is Tyrosine-protein kinase Fgr (Fgr) (Rattus norvegicus (Rat)).